Reading from the N-terminus, the 465-residue chain is Chromosomal replication initiator protein DnaA (465 aa).

Residues 1 to 72 form a domain I, interacts with DnaA modulators region; sequence MRTKQLWQVA…ETLSLLLGRP (72 aa). Positions 72-117 are domain II; sequence PIAVHFTVHGQDDEEHPVQRRPQRRALASEEGSASKQLSLTPSPEH. Residues 80-118 are disordered; that stretch reads HGQDDEEHPVQRRPQRRALASEEGSASKQLSLTPSPEHG. A compositionally biased stretch (polar residues) spans 103–113; the sequence is GSASKQLSLTP. Residues 118 to 334 form a domain III, AAA+ region region; it reads GLNPRYTFEK…GALNRIVALA (217 aa). Residues Gly-162, Gly-164, Lys-165, and Thr-166 each contribute to the ATP site. Positions 335–465 are domain IV, binds dsDNA; that stretch reads QLTHQPITLA…DAKAPLASRH (131 aa).

The protein belongs to the DnaA family. In terms of assembly, oligomerizes as a right-handed, spiral filament on DNA at oriC.

The protein localises to the cytoplasm. Functionally, plays an essential role in the initiation and regulation of chromosomal replication. ATP-DnaA binds to the origin of replication (oriC) to initiate formation of the DNA replication initiation complex once per cell cycle. Binds the DnaA box (a 9 base pair repeat at the origin) and separates the double-stranded (ds)DNA. Forms a right-handed helical filament on oriC DNA; dsDNA binds to the exterior of the filament while single-stranded (ss)DNA is stabiized in the filament's interior. The ATP-DnaA-oriC complex binds and stabilizes one strand of the AT-rich DNA unwinding element (DUE), permitting loading of DNA polymerase. After initiation quickly degrades to an ADP-DnaA complex that is not apt for DNA replication. Binds acidic phospholipids. This chain is Chromosomal replication initiator protein DnaA, found in Thermomicrobium roseum (strain ATCC 27502 / DSM 5159 / P-2).